We begin with the raw amino-acid sequence, 155 residues long: Putative pre-16S rRNA nuclease (155 aa).

The protein belongs to the YqgF nuclease family.

It localises to the cytoplasm. Could be a nuclease involved in processing of the 5'-end of pre-16S rRNA. This is Putative pre-16S rRNA nuclease from Wolbachia pipientis wMel.